Consider the following 409-residue polypeptide: 5-aminolevulinate synthase (409 aa).

R21, S137, and K156 together coordinate substrate. 3 residues coordinate pyridoxal 5'-phosphate: S189, H217, and T245. K248 is a catalytic residue. The residue at position 248 (K248) is an N6-(pyridoxal phosphate)lysine. T277 and T278 together coordinate pyridoxal 5'-phosphate. T365 provides a ligand contact to substrate.

This sequence belongs to the class-II pyridoxal-phosphate-dependent aminotransferase family. Homodimer. The cofactor is pyridoxal 5'-phosphate.

The enzyme catalyses succinyl-CoA + glycine + H(+) = 5-aminolevulinate + CO2 + CoA. Its pathway is porphyrin-containing compound metabolism; protoporphyrin-IX biosynthesis; 5-aminolevulinate from glycine: step 1/1. The protein is 5-aminolevulinate synthase (hemA) of Paracoccus denitrificans (strain Pd 1222).